The sequence spans 102 residues: MQEKIRIKLKAFDHKVLDQSVKQIVDTVKRGGGLVKGPIPLPTRRRVWCVHRSPHKFEQSREHFEMRIHKRLIEIENATPQTIEALMDISLPAGVEVEIKLS.

Belongs to the universal ribosomal protein uS10 family. Part of the 30S ribosomal subunit.

In terms of biological role, involved in the binding of tRNA to the ribosomes. The protein is Small ribosomal subunit protein uS10 of Sulfurihydrogenibium sp. (strain YO3AOP1).